The chain runs to 400 residues: Transcription initiation factor IIF subunit beta (400 aa).

The span at 1 to 19 (MSSGSAGAPALSNNSTNSV) shows a compositional bias: polar residues. Positions 1–47 (MSSGSAGAPALSNNSTNSVAKEKSGNISGDEYLSQEEEVFDGNDIEN) are disordered. Phosphoserine occurs at positions 28, 34, and 56. Positions 33–47 (LSQEEEVFDGNDIEN) are enriched in acidic residues. Disordered stretches follow at residues 165-194 (QERE…VMTD) and 366-400 (TLGE…EDVV). Over residues 174 to 189 (KQQQQKRRNNRKKFNH) the composition is skewed to basic residues. Residues 386–400 (AEADLEDEIEMEDVV) are compositionally biased toward acidic residues.

Belongs to the TFIIF beta subunit family. As to quaternary structure, TFIIF is composed of three different subunits: TFG1/RAP74, TFG2/RAP30 and TAF14.

The protein resides in the nucleus. Functionally, TFIIF is a general transcription initiation factor that binds to RNA polymerase II. Its functions include the recruitment of RNA polymerase II to the promoter bound DNA-TBP-TFIIB complex, decreasing the affinity of RNA polymerase II for non-specific DNA, allowing for the subsequent recruitment of TFIIE and TFIIH, and facilitating RNA polymerase II elongation. This is Transcription initiation factor IIF subunit beta (TFG2) from Saccharomyces cerevisiae (strain ATCC 204508 / S288c) (Baker's yeast).